We begin with the raw amino-acid sequence, 292 residues long: TFYDESCPDVSNIVRRVVQQALVSDERAGARLIRLHFHDCFVNGCDGSVLLEDQPGVVSELAAPGNANITGFNIVNNIKAAVEKACPGVVSCADILAIASVGSVNLAGGPCWEVQLGRRDSRRANLQGAIDGLPSPFENVTQLKRKFDRVDLDSTDLVALSGAHTFGKSRCQFFDRRLNVSNPDSTLNPRYAQQLRQACSSGRDTFVNLDPTTPNKFDKNYYTNLQSNTGPLTSDQVLHSTPGEDTVKIVNLFAASQNQFFESFGQSMINMGNIQPLTGNQGEIRSNCRRLN.

Cystine bridges form between Cys-7-Cys-86, Cys-40-Cys-45, Cys-92-Cys-288, and Cys-171-Cys-199. His-38 functions as the Proton acceptor in the catalytic mechanism. 5 residues coordinate Ca(2+): Asp-39, Val-42, Gly-44, Asp-46, and Ser-48. Residue Asn-68 is glycosylated (N-linked (GlcNAc...) asparagine). Pro-134 contributes to the substrate binding site. Asn-139 carries N-linked (GlcNAc...) asparagine glycosylation. His-164 provides a ligand contact to heme b. Thr-165 serves as a coordination point for Ca(2+). N-linked (GlcNAc...) asparagine glycosylation occurs at Asn-179. The Ca(2+) site is built by Asp-210, Thr-213, and Asp-218.

This sequence belongs to the peroxidase family. Classical plant (class III) peroxidase subfamily. Requires Ca(2+) as cofactor. It depends on heme b as a cofactor.

It catalyses the reaction 2 a phenolic donor + H2O2 = 2 a phenolic radical donor + 2 H2O. In terms of biological role, removal of H(2)O(2), oxidation of toxic reductants, biosynthesis and degradation of lignin, suberization, auxin catabolism, response to environmental stresses such as wounding, pathogen attack and oxidative stress. These functions might be dependent on each isozyme/isoform in each plant tissue. The chain is Peroxidase 2 from Cucumis sativus (Cucumber).